Here is a 410-residue protein sequence, read N- to C-terminus: MINIDMTGEKRPLDLPYPSSFAPISAPRNQTFTYMGKFSIDPQYPGASCYPEGIINIVSAGILQGVTPPASTTASSSVTSASPNPLATGPLGVCTMSQTQPELDHLYSPPPPPPPYSGCTGDLYQDPSAFLSPPTTSTSSLAYQPPPSYPSPKPAMDPGLIPMIPDYPGFFPSPCQRDPHGAAGPDRKPFPCPLDSLRVPPPLTPLSTIRNFTLGGPSAGVTGPGASGGSEGPRLTGSGSAAVTTSPYNPHHLPLRPILRPRKYPNRPSKTPVHERPYPCPAEGCDRRFSRSDELTRHIRIHTGHKPFQCRICMRNFSRSDHLTTHIRTHTGEKPFACDYCGRKFARSDERKRHTKIHLRQKERKSSAPSSSASAQPSASGPGGSQAGGSLCSNSTIGGPLACTSRTRTP.

The span at proline 68–proline 83 shows a compositional bias: low complexity. Disordered stretches follow at residues proline 68–threonine 95, proline 101–threonine 120, and proline 127–serine 151. The HCFC1-binding-motif (HBM) signature appears at aspartate 104–tyrosine 107. Over residues proline 127 to tyrosine 143 the composition is skewed to low complexity. Lysine 188 bears the N6-acetyllysine mark. A disordered region spans residues proline 217–aspartate 286. Gly residues predominate over residues threonine 222–glutamate 231. Positions glycine 237–tyrosine 248 are enriched in polar residues. 3 C2H2-type zinc fingers span residues tyrosine 278–histidine 302, phenylalanine 308–histidine 330, and phenylalanine 336–histidine 358. A disordered region spans residues aspartate 349–proline 410. The span at arginine 353–glutamate 363 shows a compositional bias: basic residues. The span at serine 367–serine 380 shows a compositional bias: low complexity.

This sequence belongs to the EGR C2H2-type zinc-finger protein family. In terms of assembly, interacts with HCFC1. Interacts with WWP2. Interacts with UBC9. Interacts with CITED1. Interacts (via phosphorylated form) with SFN. Ubiquitinated by WWP2 leading to proteasomal degradation. Post-translationally, acetylated. May be deacetylated by HDAC6, HDAC10 or SIRT1.

It localises to the nucleus. It functions in the pathway protein modification; protein sumoylation. Functionally, sequence-specific DNA-binding transcription factor. Plays a role in hindbrain segmentation by regulating the expression of a subset of homeobox containing genes and in Schwann cell myelination by regulating the expression of genes involved in the formation and maintenance of myelin. Binds to two EGR2-consensus sites EGR2A (5'-CTGTAGGAG-3') and EGR2B (5'-ATGTAGGTG-3') in the HOXB3 enhancer and promotes HOXB3 transcriptional activation. Binds to specific DNA sites located in the promoter region of HOXA4, HOXB2 and ERBB2. Regulates hindbrain segmentation by controlling the expression of Hox genes, such as HOXA4, HOXB3 and HOXB2, and thereby specifying odd and even rhombomeres. Promotes the expression of HOXB3 in the rhombomere r5 in the hindbrain. Regulates myelination in the peripheral nervous system after birth, possibly by regulating the expression of myelin proteins, such as MPZ, and by promoting the differentiation of Schwann cells. Involved in the development of the jaw openener musculature, probably by playing a role in its innervation through trigeminal motor neurons. May play a role in adipogenesis, possibly by regulating the expression of CEBPB. In terms of biological role, E3 SUMO-protein ligase helping SUMO1 conjugation to its coregulators NAB1 and NAB2, whose sumoylation down-regulates EGR2 transcriptional activity. The protein is E3 SUMO-protein ligase EGR2 (EGR2) of Cricetulus griseus (Chinese hamster).